We begin with the raw amino-acid sequence, 425 residues long: Serine--tRNA ligase (425 aa).

Residue Thr-230–Glu-232 participates in L-serine binding. Arg-261–Glu-263 serves as a coordination point for ATP. Glu-284 is an L-serine binding site. Residue Glu-348–Ser-351 coordinates ATP. L-serine is bound at residue Ser-384.

This sequence belongs to the class-II aminoacyl-tRNA synthetase family. Type-1 seryl-tRNA synthetase subfamily. In terms of assembly, homodimer. The tRNA molecule binds across the dimer.

It is found in the cytoplasm. It catalyses the reaction tRNA(Ser) + L-serine + ATP = L-seryl-tRNA(Ser) + AMP + diphosphate + H(+). It carries out the reaction tRNA(Sec) + L-serine + ATP = L-seryl-tRNA(Sec) + AMP + diphosphate + H(+). It participates in aminoacyl-tRNA biosynthesis; selenocysteinyl-tRNA(Sec) biosynthesis; L-seryl-tRNA(Sec) from L-serine and tRNA(Sec): step 1/1. Functionally, catalyzes the attachment of serine to tRNA(Ser). Is also able to aminoacylate tRNA(Sec) with serine, to form the misacylated tRNA L-seryl-tRNA(Sec), which will be further converted into selenocysteinyl-tRNA(Sec). The chain is Serine--tRNA ligase from Streptococcus equi subsp. zooepidemicus (strain MGCS10565).